Reading from the N-terminus, the 1019-residue chain is Sca1 complex protein phr (1019 aa).

Disordered regions lie at residues Ile89–Phe118, Ala131–Asn202, Gln265–Asn287, and Ser512–Leu546. Over residues Ser93–Ser102 the composition is skewed to low complexity. Residues Asn141–Asp155 show a composition bias toward basic and acidic residues. A coiled-coil region spans residues Asn158–Asn188. Residues Asn158–Asn202 are compositionally biased toward low complexity. The 102-residue stretch at Glu735–Phe836 folds into the PH domain. The span at Val860–Gly872 shows a compositional bias: low complexity. 3 disordered regions span residues Val860–Ile890, Asn904–Leu951, and Ser977–Lys1019. The span at Thr879–Ile890 shows a compositional bias: polar residues. The segment covering Ser977–Ser986 has biased composition (low complexity). Residues Pro987–Lys1019 are compositionally biased toward polar residues.

Component of the Sca1 complex composed of at least gefA, gefH, scaA, phr, and the protein phosphatase 2A subunits pppA and pho2B. Interacts directly with gefH.

It is found in the cell membrane. In terms of biological role, component of the Sca1 complex, a regulator of cell motility, chemotaxis and signal relay. The Sca1 complex is recruited to the plasma membrane in a chemoattractant- and F-actin-dependent manner and is enriched at the leading edge of chemotaxing cells where it regulates F-actin dynamics and signal relay by controlling the activation of rasC and the downstream target of rapamycin complex 2 (TORC2)-Akt/protein kinase B (PKB) pathway. This chain is Sca1 complex protein phr, found in Dictyostelium discoideum (Social amoeba).